Reading from the N-terminus, the 108-residue chain is Nucleoid-associated protein Bcen_6253 (108 aa).

The span at 85–95 (ATSQEKMSGMT) shows a compositional bias: polar residues. The tract at residues 85-108 (ATSQEKMSGMTSGLPLPPGFKLPF) is disordered. The segment covering 99–108 (PLPPGFKLPF) has biased composition (pro residues).

Belongs to the YbaB/EbfC family. In terms of assembly, homodimer.

The protein resides in the cytoplasm. It is found in the nucleoid. Binds to DNA and alters its conformation. May be involved in regulation of gene expression, nucleoid organization and DNA protection. This chain is Nucleoid-associated protein Bcen_6253, found in Burkholderia orbicola (strain AU 1054).